Here is a 228-residue protein sequence, read N- to C-terminus: Indole-3-glycerol phosphate synthase (228 aa).

This sequence belongs to the TrpC family.

The catalysed reaction is 1-(2-carboxyphenylamino)-1-deoxy-D-ribulose 5-phosphate + H(+) = (1S,2R)-1-C-(indol-3-yl)glycerol 3-phosphate + CO2 + H2O. It functions in the pathway amino-acid biosynthesis; L-tryptophan biosynthesis; L-tryptophan from chorismate: step 4/5. This is Indole-3-glycerol phosphate synthase from Pyrococcus furiosus (strain ATCC 43587 / DSM 3638 / JCM 8422 / Vc1).